We begin with the raw amino-acid sequence, 338 residues long: Probable O-antigen biosynthesis glycosyltransferase WbiN (338 aa).

It belongs to the glycosyltransferase group 1 family. Glycosyltransferase 4 subfamily.

It carries out the reaction N-acetyl-alpha-D-galactosaminyl-di-trans,octa-cis-undecaprenyl diphosphate + UDP-N-acetyl-alpha-D-galactosamine = alpha-D-GalNAc-(1-&gt;3)-alpha-D-GalNAc-di-trans,octa-cis-undecaprenyl diphosphate + UDP + H(+). It functions in the pathway bacterial outer membrane biogenesis; LPS O-antigen biosynthesis. Its function is as follows. Involved in the assembly of the O-repeating unit during O-antigen biosynthesis. The polypeptide is Probable O-antigen biosynthesis glycosyltransferase WbiN (Escherichia coli).